We begin with the raw amino-acid sequence, 988 residues long: MPGGKRGLVAPQNTFLENIVRRSSESSFLLGNAQIVDWPVVYSNDGFCKLSGYHRADVMQKSSTCSFMYGELTDKKTIEKVRQTFDNYESNCFEVLLYKKNRTPVWFYMQIAPIRNEHEKVVLFLCTFKDITLFKQPIEDDSTKGWTKFARLTRALTNSRSVLQQLTPMNKTEVVHKHSRLAEVLQLGSDILPQYKQEAPKTPPHIILHYCAFKTTWDWVILILTFYTAIMVPYNVSFKTKQNNIAWLVLDSVVDVIFLVDIVLNFHTTFVGPGGEVISDPKLIRMNYLKTWFVIDLLSCLPYDIINAFENVDEGISSLFSSLKVVRLLRLGRVARKLDHYLEYGAAVLVLLVCVFGLVAHWLACIWYSIGDYEVIDEVTNTIQIDSWLYQLALSIGTPYRYNTSAGIWEGGPSKDSLYVSSLYFTMTSLTTIGFGNIAPTTDVEKMFSVAMMMVGSLLYATIFGNVTTIFQQMYANTNRYHEMLNNVRDFLKLYQVPKGLSERVMDYIVSTWSMSKGIDTEKVLSICPKDMRADICVHLNRKVFNEHPAFRLASDGCLRALAVEFQTIHCAPGDLIYHAGESVDALCFVVSGSLEVIQDDEVVAILGKGDVFGDIFWKETTLAHACANVRALTYCDLHIIKREALLKVLDFYTAFANSFSRNLTLTCNLRKRIIFRKISDVKKEEEERLRQKNEVTLSIPVDHPVRKLFQKFKQQKELRNQGSTQGDPERNQLQVESRSLQNGASITGTSVVTVSQITPIQTSLAYVKTSESLKQNNRDAMELKPNGGADQKCLKVNSPIRMKNGNGKGWLRLKNNMGAHEEKKEDWNNVTKAESMGLLSEDPKSSDSENSVTKNPLRKTDSCDSGITKSDLRLDKAGEARSPLEHSPIQADAKHPFYPIPEQALQTTLQEVKHELKEDIQLLSCRMTALEKQVAEILKILSEKSVPQASSPKSQMPLQVPPQIPCQDIFSVSRPESPESDKDEIHF.

At Met1 to Trp217 the chain is on the cytoplasmic side. Residues Gln12 to Ser90 enclose the PAS domain. The region spanning Asn91–Thr143 is the PAC domain. The helical transmembrane segment at Asp218–Phe238 threads the bilayer. Residues Lys239–Asn243 are Extracellular-facing. Residues Asn244–Leu264 form a helical membrane-spanning segment. The Cytoplasmic portion of the chain corresponds to Asn265–Thr291. The helical transmembrane segment at Trp292–Val312 threads the bilayer. The Extracellular segment spans residues Asp313–Leu319. The chain crosses the membrane as a helical; Voltage-sensor span at residues Phe320 to His340. Over Tyr341–Ala346 the chain is Cytoplasmic. The helical transmembrane segment at Ala347–Trp367 threads the bilayer. At Tyr368 to Tyr419 the chain is on the extracellular side. The N-linked (GlcNAc...) asparagine glycan is linked to Asn403. Positions Val420 to Pro440 form an intramembrane region, pore-forming. A Selectivity filter motif is present at residues Thr432–Asn437. Topologically, residues Thr441–Lys446 are extracellular. The chain crosses the membrane as a helical span at residues Met447–Val467. The Cytoplasmic segment spans residues Thr468–Phe988. Ala550 to Thr667 provides a ligand contact to a nucleoside 3',5'-cyclic phosphate. A calmodulin-binding region spans residues His704–Gln715. Residues Lys717–Gln742 are disordered. Over residues Asn721–Gln742 the composition is skewed to polar residues. Lys785 is covalently cross-linked (Glycyl lysine isopeptide (Lys-Gly) (interchain with G-Cter in ubiquitin)). Residues Gly838–Ile890 form a disordered region. A compositionally biased stretch (basic and acidic residues) spans Ser871–Leu885. Ser883 carries the post-translational modification Phosphoserine. A CAD (involved in subunit assembly) region spans residues Thr909–Pro948. Positions Asp969 to Phe988 are disordered. A compositionally biased stretch (basic and acidic residues) spans Glu977–Phe988.

The protein belongs to the potassium channel family. H (Eag) (TC 1.A.1.20) subfamily. Kv10.2/KCNH5 sub-subfamily. Homotetramer. The potassium channel is probably composed of a homo- or heterotetrameric complex of pore-forming alpha subunits that can associate with modulating beta subunits. Heteromultimer with KCNH1/EAG. In terms of tissue distribution, detected in brain, skeletal muscle, heart, placenta, lung and liver, and at low levels in kidney.

Its subcellular location is the membrane. It carries out the reaction K(+)(in) = K(+)(out). Functionally, pore-forming (alpha) subunit of a voltage-gated delayed rectifier potassium channel that mediates outward-rectifying potassium currents which, on depolarization, reaches a steady-state level and do not inactivate. The kinetic is characterized by a slow activation time course and a small voltage dependence of the activation time constants, therefore, starts to open at more negative voltages. The activation kinetics depend on the prepulse potential and external divalent cation concentration. The time course of activation is biphasic with a fast and a slowly activating current component. With negative prepulses, the current activation is delayed and slowed down several fold, whereas more positive prepulses speed up activation, therefore the activation rate depends on holding potential. This Homo sapiens (Human) protein is Voltage-gated delayed rectifier potassium channel KCNH5.